The following is a 519-amino-acid chain: MEVLQASSLSFQLLRRHSRNNLINKFRNPSLPRIHMPRQNIDLKTFAAITPTVACPPSEPEIIPEKKEDKFEWYENWYPVASVCDLDKRRPHGRKVIGIDVVVWWDRKENAWKVFDDTCPHRLAPLSEGRIDQWGRLQCVYHGWCFDGAGACKFIPQAPHHGPPVETSKKACVKGVYPSCVRNGIVWFWPNSDPKYKDIFLTKKPHYIPELDDPSFTCTMTTREVPYGYEILAENLMDPSHVPYAHYGILELEKVKESAKRDREGGHELEIRVGKIDVNGFSAKQVSADYYFVPPYLYYGRITPNTATKAIDVTLPVVPEEKTAMIIFYCIPVRPGYSRLIFAGARNFAVQVDRFVPRWITHMSHNLIFDSDLFLLHVEERKLKDLDWHKSCYIPTKADGQVVAFRRWLNKYGGTQVDWRNNFTPALPPTPSREQLFDRYWSHTAECSSCSVACKRLNALEIGLQAMSLVFVAMAAAVSAPATRYSMVAMAVLSFLASKWLSRFIHKTFYNHGYDHAFI.

A chloroplast-targeting transit peptide spans 1–46; sequence MEVLQASSLSFQLLRRHSRNNLINKFRNPSLPRIHMPRQNIDLKTF. The region spanning 77-188 is the Rieske domain; that stretch reads WYPVASVCDL…SCVRNGIVWF (112 aa). The [2Fe-2S] cluster site is built by Cys-119, His-121, Cys-139, and His-142. Fe cation contacts are provided by His-241 and His-246. Residues 447-450 carry the Redox-active motif motif; it reads CSSC. 2 consecutive transmembrane segments (helical) span residues 462-478 and 485-501; these read IGLQ…AAAV and YSMV…SKWL.

[2Fe-2S] cluster is required as a cofactor. As to expression, glandular trichome-specific expression in leaves.

The protein localises to the plastid. It is found in the chloroplast membrane. The protein resides in the cytoplasm. The catalysed reaction is salvigenin + 2 reduced [2Fe-2S]-[ferredoxin] + O2 + 2 H(+) = 8-hydroxysalvigenin + 2 oxidized [2Fe-2S]-[ferredoxin] + H2O. The protein operates within flavonoid metabolism. Rieske-type, PAO-family oxygenase involved in the biosynthesis of polymethoxylated flavonoids natural products such as nevadensin and salvigenin, aroma compounds which contribute to the flavor of sweet basil, and exhibit pharmacological activities such as anti-allergic, anti-oxidant, antibacterial, anti-proliferative, and anti-inflammatory effects. Catalyzes the hydroxylation of salvigenin to produce 8-hydroxysalvigenin (8-OH-SALV). The chain is Flavonoid 8-hydroxylase 2, chloroplastic from Ocimum basilicum (Sweet basil).